A 395-amino-acid polypeptide reads, in one-letter code: MAKAKFERSKPHVNIGTIGHVDHGKTTLTAAITTVLAKAGGAEARGYDQIDAAPEERERGITISTAHVEYETETRHYAHVDCPGHADYVKNMITGAAQMDGGILVVSAADGPMPQTREHILLSRQVGVPYIVVFLNKCDMVDDEELLELVEMEVRDLLSEYGFPGDDIPVIKGSALKALQGEADWEAKIIELMTEVDAYIPTPERETDKPFLMPIEDVFSITGRGTVATGRVERGIVKVGDVVEIIGLAEENASTTVTGVEMFRKLLDQAQAGDNIGALLRGVAREDIQRGQVLAKTGSVKAHAKFKAEVFVLSKEEGGRHTPFFANYRPQFYFRTTDVTGIIQLPEGTEMVMPGDNIEMTIELIAPIAIEEGTKFSIREGGRTVGYGVVATIVE.

In terms of domain architecture, tr-type G spans 10–204 (KPHVNIGTIG…EVDAYIPTPE (195 aa)). Positions 19 to 26 (GHVDHGKT) are G1. 19–26 (GHVDHGKT) lines the GTP pocket. Thr26 contributes to the Mg(2+) binding site. Residues 60–64 (GITIS) form a G2 region. A G3 region spans residues 81–84 (DCPG). GTP contacts are provided by residues 81 to 85 (DCPGH) and 136 to 139 (NKCD). The tract at residues 136 to 139 (NKCD) is G4. Positions 174 to 176 (SAL) are G5.

Belongs to the TRAFAC class translation factor GTPase superfamily. Classic translation factor GTPase family. EF-Tu/EF-1A subfamily. In terms of assembly, monomer.

It localises to the cytoplasm. It carries out the reaction GTP + H2O = GDP + phosphate + H(+). Its function is as follows. GTP hydrolase that promotes the GTP-dependent binding of aminoacyl-tRNA to the A-site of ribosomes during protein biosynthesis. The polypeptide is Elongation factor Tu (Bacillus cereus (strain G9842)).